The sequence spans 122 residues: NADH-ubiquinone oxidoreductase chain 3 (122 aa).

3 helical membrane-spanning segments follow: residues 12 to 32 (VLIFFIFSFGLSCIILGLSYV), 66 to 86 (LVAILFIIFDLEVAFLFPWAV), and 91 to 111 (VTIFGFWTMFIFLLILTVGFI).

The protein belongs to the complex I subunit 3 family.

Its subcellular location is the mitochondrion membrane. The catalysed reaction is a ubiquinone + NADH + 5 H(+)(in) = a ubiquinol + NAD(+) + 4 H(+)(out). Functionally, core subunit of the mitochondrial membrane respiratory chain NADH dehydrogenase (Complex I) that is believed to belong to the minimal assembly required for catalysis. Complex I functions in the transfer of electrons from NADH to the respiratory chain. The immediate electron acceptor for the enzyme is believed to be ubiquinone. The polypeptide is NADH-ubiquinone oxidoreductase chain 3 (NAD3) (Reclinomonas americana).